Reading from the N-terminus, the 282-residue chain is Bifunctional protein FolD (282 aa).

Residues 165-167 (GAS) and Ile-231 each bind NADP(+).

The protein belongs to the tetrahydrofolate dehydrogenase/cyclohydrolase family. As to quaternary structure, homodimer.

The enzyme catalyses (6R)-5,10-methylene-5,6,7,8-tetrahydrofolate + NADP(+) = (6R)-5,10-methenyltetrahydrofolate + NADPH. The catalysed reaction is (6R)-5,10-methenyltetrahydrofolate + H2O = (6R)-10-formyltetrahydrofolate + H(+). The protein operates within one-carbon metabolism; tetrahydrofolate interconversion. In terms of biological role, catalyzes the oxidation of 5,10-methylenetetrahydrofolate to 5,10-methenyltetrahydrofolate and then the hydrolysis of 5,10-methenyltetrahydrofolate to 10-formyltetrahydrofolate. This chain is Bifunctional protein FolD, found in Francisella tularensis subsp. mediasiatica (strain FSC147).